Consider the following 294-residue polypeptide: Probable 3-hydroxyisobutyrate dehydrogenase (294 aa).

NAD(+)-binding positions include 3–31 and threonine 93; that span reads TIAFLGLGNMGAPMSANLVGAGHVVRGFD. Residue lysine 168 is part of the active site. Residue lysine 243 coordinates NAD(+).

Belongs to the HIBADH-related family.

It carries out the reaction 3-hydroxy-2-methylpropanoate + NAD(+) = 2-methyl-3-oxopropanoate + NADH + H(+). It participates in amino-acid degradation; L-valine degradation. In Mycobacterium bovis (strain ATCC BAA-935 / AF2122/97), this protein is Probable 3-hydroxyisobutyrate dehydrogenase (mmsB).